The following is a 174-amino-acid chain: RNA pyrophosphohydrolase (174 aa).

The Nudix hydrolase domain maps to 6-145 (GYRPNVGMII…KRRVYWQALQ (140 aa)). The Nudix box motif lies at 38–59 (GGIDYAETPEQAMFRELEEEVG).

It belongs to the Nudix hydrolase family. RppH subfamily. Requires a divalent metal cation as cofactor.

Its function is as follows. Accelerates the degradation of transcripts by removing pyrophosphate from the 5'-end of triphosphorylated RNA, leading to a more labile monophosphorylated state that can stimulate subsequent ribonuclease cleavage. In Acidithiobacillus ferrooxidans (strain ATCC 53993 / BNL-5-31) (Leptospirillum ferrooxidans (ATCC 53993)), this protein is RNA pyrophosphohydrolase.